The primary structure comprises 201 residues: MAPDLSELAAAAAARGAYLAGVGVAVLLAASFLPVAESSCVRDNSLVRDISQMPQSSYGIEGLSHITVAGALNHGMKEVEVWLQTISPGQRTPIHRHSCEEVFTVLKGKGTLLMGSSSLKYPGQPQEIPFFQNTTFSIPVNDPHQVWNSDEHEDLQVLVIISRPPAKIFLYDDWSMPHTAAVLKFPFVWDEDCFEAAKDEL.

The signal sequence occupies residues Met-1 to Ser-38. Residues Cys-40 and Cys-193 are joined by a disulfide bond. Residues His-95, His-97, and Glu-101 each contribute to the Zn(2+) site. Asn-133 is a glycosylation site (N-linked (GlcNAc...) asparagine). His-144 lines the Zn(2+) pocket. A Prevents secretion from ER motif is present at residues Lys-198–Leu-201.

Homodimer. In terms of processing, glycosylated. In terms of tissue distribution, expressed in roots, coleoptiles, leaves, stems, tassels and ears.

The protein localises to the endoplasmic reticulum lumen. Receptor for the plant hormone auxin. This chain is Auxin-binding protein 1, found in Zea mays (Maize).